The chain runs to 239 residues: ATP-dependent dethiobiotin synthetase BioD (239 aa).

Residue 15–20 coordinates ATP; that stretch reads EIGKTF. Mg(2+) is bound at residue Thr19. Lys40 is an active-site residue. ATP-binding positions include Asp57, 118–121, and 178–179; these read EGVG and NH. 2 residues coordinate Mg(2+): Asp57 and Glu118.

It belongs to the dethiobiotin synthetase family. Homodimer. It depends on Mg(2+) as a cofactor.

Its subcellular location is the cytoplasm. The catalysed reaction is (7R,8S)-7,8-diammoniononanoate + CO2 + ATP = (4R,5S)-dethiobiotin + ADP + phosphate + 3 H(+). It functions in the pathway cofactor biosynthesis; biotin biosynthesis; biotin from 7,8-diaminononanoate: step 1/2. Functionally, catalyzes a mechanistically unusual reaction, the ATP-dependent insertion of CO2 between the N7 and N8 nitrogen atoms of 7,8-diaminopelargonic acid (DAPA, also called 7,8-diammoniononanoate) to form a ureido ring. This chain is ATP-dependent dethiobiotin synthetase BioD, found in Burkholderia cenocepacia (strain ATCC BAA-245 / DSM 16553 / LMG 16656 / NCTC 13227 / J2315 / CF5610) (Burkholderia cepacia (strain J2315)).